The sequence spans 91 residues: MAKEELLEFEGTVTEVLPDGNFRVRLDNDHQILAYAAGKMKKNRIRTIEGDRVVVEMSPYDLDRGRINFRHKAEGNAPPPGARRQQNFRRR.

The S1-like domain occupies 1–72; it reads MAKEELLEFE…DRGRINFRHK (72 aa). The disordered stretch occupies residues 70–91; it reads RHKAEGNAPPPGARRQQNFRRR.

The protein belongs to the IF-1 family. As to quaternary structure, component of the 30S ribosomal translation pre-initiation complex which assembles on the 30S ribosome in the order IF-2 and IF-3, IF-1 and N-formylmethionyl-tRNA(fMet); mRNA recruitment can occur at any time during PIC assembly.

It localises to the cytoplasm. Its function is as follows. One of the essential components for the initiation of protein synthesis. Stabilizes the binding of IF-2 and IF-3 on the 30S subunit to which N-formylmethionyl-tRNA(fMet) subsequently binds. Helps modulate mRNA selection, yielding the 30S pre-initiation complex (PIC). Upon addition of the 50S ribosomal subunit IF-1, IF-2 and IF-3 are released leaving the mature 70S translation initiation complex. The chain is Translation initiation factor IF-1 from Azorhizobium caulinodans (strain ATCC 43989 / DSM 5975 / JCM 20966 / LMG 6465 / NBRC 14845 / NCIMB 13405 / ORS 571).